We begin with the raw amino-acid sequence, 615 residues long: MKSTDPIKIAVLPGDGIGIEVTEATLPVFEVLDVPVILNYGDIGWEFWKKEGAAIPSRTWQLIASSDTVLLGAITSKPQREAKQELSNALKKSNPYYVSPVIQLRQGLDLFANVRPCFSIDDQSKPFNFCIIRENSEGLYCGFDYFPLPKAIHSLLAESQHWQTIPADEASCALRLQSKSGLTRLFDFAFKHAMQTGMPRVTLADKPNVLRESGEFTRKIFESTAQRYPKIQADILNVDAVALWLIKSPEKFGVIVAENMFGDILSDVGAGVMGGLGLAPSANIGDKGSYFEPVHGSGPRIRKNCANPSAMFLTISMLLNHFGYPDRAKKIVNAVMQVIKEKRFITYDLGGHATTTDMANAVIEHCARLNASCLSKDFNPTPKENLIESDTMPNLLQQLINCNSAEISDALDACGIEGGLLSIKPLSQGMKIIGPAYTIQYLPREKKGTAFHNAANYIDKVPKHSVIVIDNNGQIDCTVWGDLLTHTALRNNIMGTVVHGAVRDVESIRSTNYPVFCTGIYMCSGKNRVYKANEQCPLSINGVTINPGDIIFADDNGVLVIPNDRLQEVVNKTIAIRLTEERIKTAIASGSTLEQAREDYCYEQPWLGINKKRES.

Belongs to the isocitrate and isopropylmalate dehydrogenases family. The protein to M.jannaschii MJ0644 in the C-terminal section.

In Legionella pneumophila subsp. pneumophila (strain Philadelphia 1 / ATCC 33152 / DSM 7513), this protein is Protein DlpA (dlpA).